The sequence spans 483 residues: Aspartyl/glutamyl-tRNA(Asn/Gln) amidotransferase subunit B (483 aa).

Belongs to the GatB/GatE family. GatB subfamily. As to quaternary structure, heterotrimer of A, B and C subunits.

The catalysed reaction is L-glutamyl-tRNA(Gln) + L-glutamine + ATP + H2O = L-glutaminyl-tRNA(Gln) + L-glutamate + ADP + phosphate + H(+). It catalyses the reaction L-aspartyl-tRNA(Asn) + L-glutamine + ATP + H2O = L-asparaginyl-tRNA(Asn) + L-glutamate + ADP + phosphate + 2 H(+). Allows the formation of correctly charged Asn-tRNA(Asn) or Gln-tRNA(Gln) through the transamidation of misacylated Asp-tRNA(Asn) or Glu-tRNA(Gln) in organisms which lack either or both of asparaginyl-tRNA or glutaminyl-tRNA synthetases. The reaction takes place in the presence of glutamine and ATP through an activated phospho-Asp-tRNA(Asn) or phospho-Glu-tRNA(Gln). The sequence is that of Aspartyl/glutamyl-tRNA(Asn/Gln) amidotransferase subunit B from Marinobacter nauticus (strain ATCC 700491 / DSM 11845 / VT8) (Marinobacter aquaeolei).